The primary structure comprises 329 residues: Serine dehydratase-like (329 aa).

At Met-1 the chain carries N-acetylmethionine. Lys-48 bears the N6-(pyridoxal phosphate)lysine mark.

This sequence belongs to the serine/threonine dehydratase family. In terms of assembly, monomer. Homodimer. Pyridoxal 5'-phosphate is required as a cofactor. Abundantly expressed in liver.

It catalyses the reaction L-serine = pyruvate + NH4(+). The enzyme catalyses L-threonine = 2-oxobutanoate + NH4(+). The catalysed reaction is L-glutamate = D-glutamate. Catalyzes the pyridoxal-phosphate-dependent dehydrative deamination of L-threonine and L-serine to ammonia and alpha-ketobutyrate and pyruvate, respectively. Also exhibits racemase activity towards L-glutamate and D-glutamate. This chain is Serine dehydratase-like (Sdsl), found in Mus musculus (Mouse).